The chain runs to 956 residues: Endogenous retrovirus group K member 8 Pol protein (956 aa).

The region spanning 57-245 (LEKGHIEPSF…TPFHYLGMQI (189 aa)) is the Reverse transcriptase domain. An LPQG motif is present at residues 161 to 164 (LPQG). The YXDD motif lies at 195–198 (YIDD). In terms of domain architecture, RNase H type-1 spans 460 to 590 (LENALTVFTD…ADLLVSSALI (131 aa)). Mg(2+) contacts are provided by Asp-469, Glu-497, Asp-517, and Asp-582. Residues 587-628 (SALIKAQELHALTHVNAAGLKNKFDVTWKQAKDIVQHCTQCQ) form an Integrase-type zinc finger. Zn(2+) contacts are provided by His-596, His-600, Cys-624, and Cys-627. Residues 642–803 (RGLCPNALWQ…TSAEQHLTGK (162 aa)) enclose the Integrase catalytic domain. A DNA-binding region (integrase-type) is located at residues 811–859 (KLIWWKDNKNKTWEIGKVITWGRGFACVSPGENQLPVWIPTRHLKFYNE). The disordered stretch occupies residues 864–890 (AKKSTSAETETPQSSTVDSQDEQNGDV). A compositionally biased stretch (polar residues) spans 869 to 881 (SAETETPQSSTVD).

It belongs to the beta type-B retroviral polymerase family. HERV class-II K(HML-2) pol subfamily.

It carries out the reaction DNA(n) + a 2'-deoxyribonucleoside 5'-triphosphate = DNA(n+1) + diphosphate. The catalysed reaction is Endonucleolytic cleavage to 5'-phosphomonoester.. Early post-infection, the reverse transcriptase converts the viral RNA genome into double-stranded viral DNA. The RNase H domain of the reverse transcriptase performs two functions. It degrades the RNA template and specifically removes the RNA primer from the RNA/DNA hybrid. Following nuclear import, the integrase catalyzes the insertion of the linear, double-stranded viral DNA into the host cell chromosome. Endogenous Pol proteins may have kept, lost or modified their original function during evolution. The protein is Endogenous retrovirus group K member 8 Pol protein (ERVK-8) of Homo sapiens (Human).